The chain runs to 389 residues: S-adenosylmethionine synthase (389 aa).

Histidine 18 serves as a coordination point for ATP. Aspartate 20 serves as a coordination point for Mg(2+). A K(+)-binding site is contributed by glutamate 46. L-methionine-binding residues include glutamate 59 and glutamine 103. The interval 103 to 113 (QSADIAMGVDS) is flexible loop. Residues 168-170 (DSK), aspartate 244, 250-251 (RK), alanine 267, and lysine 271 each bind ATP. Residue aspartate 244 participates in L-methionine binding. Residue lysine 275 coordinates L-methionine.

The protein belongs to the AdoMet synthase family. In terms of assembly, homotetramer; dimer of dimers. Mg(2+) is required as a cofactor. It depends on K(+) as a cofactor.

The protein resides in the cytoplasm. The catalysed reaction is L-methionine + ATP + H2O = S-adenosyl-L-methionine + phosphate + diphosphate. Its pathway is amino-acid biosynthesis; S-adenosyl-L-methionine biosynthesis; S-adenosyl-L-methionine from L-methionine: step 1/1. Its function is as follows. Catalyzes the formation of S-adenosylmethionine (AdoMet) from methionine and ATP. The overall synthetic reaction is composed of two sequential steps, AdoMet formation and the subsequent tripolyphosphate hydrolysis which occurs prior to release of AdoMet from the enzyme. The sequence is that of S-adenosylmethionine synthase from Pelagibacter ubique (strain HTCC1062).